The sequence spans 92 residues: uncharacterized protein (92 aa).

This is an uncharacterized protein from Treponema pallidum (strain Nichols).